The chain runs to 765 residues: Palmitoyltransferase ZDHHC8 (765 aa).

The Cytoplasmic portion of the chain corresponds to 1–13; it reads MPRSPGTRLKPAK. A helical membrane pass occupies residues 14–34; the sequence is YIPVATAAALLVGSSTLFFVF. At 35-52 the chain is on the lumenal side; sequence TCPWLTRAVSPAVPVYNG. A helical membrane pass occupies residues 53–73; the sequence is IIFLFVLANFSMATFMDPGVF. At 74-148 the chain is on the cytoplasmic side; the sequence is PRADEDEDKE…NCIGRRNYRY (75 aa). Positions 104 to 154 constitute a DHHC domain; sequence KWCATCHFYRPPRCSHCSVCDNCVEDFDHHCPWVNNCIGRRNYRYFFLFLL. Residue cysteine 134 is the S-palmitoyl cysteine intermediate of the active site. The chain crosses the membrane as a helical span at residues 149 to 169; sequence FFLFLLSLSAHMVGVVAFGLV. Over 170–190 the chain is Lumenal; the sequence is YVLNHAEGLGAAHTTITMAVM. The helical transmembrane segment at 191-211 threads the bilayer; the sequence is CVAGLFFIPVIGLTGFHVVLV. At 212–765 the chain is on the cytoplasmic side; sequence TRGRTTNEQV…VGGTTYEISV (554 aa). The tract at residues 293 to 352 is disordered; the sequence is GLGRSKSKGSLDRLDEKPLDLGPPLPPKIEAGTFSSDLQTPRPGSAESALSVQRTSPPTP. Residues 301–311 show a composition bias toward basic and acidic residues; that stretch reads GSLDRLDEKPL. At serine 337 the chain carries Phosphoserine. At arginine 441 the chain carries Omega-N-methylarginine. Residues 509–540 form a disordered region; the sequence is LHPGATGDPPRPLPRSFSPVLGPRPREPSPVR. A phosphoserine mark is found at serine 606, serine 627, serine 675, serine 725, and serine 743. Positions 613 to 746 are disordered; the sequence is GPGFGGARNP…PPGPSASPTR (134 aa). A compositionally biased stretch (low complexity) spans 622-653; that stretch reads PALQTSLSSLSSSVSRAPRTSSSSLQADQASS.

Belongs to the DHHC palmitoyltransferase family. ERF2/ZDHHC9 subfamily.

It is found in the golgi apparatus membrane. Its subcellular location is the mitochondrion membrane. It carries out the reaction L-cysteinyl-[protein] + hexadecanoyl-CoA = S-hexadecanoyl-L-cysteinyl-[protein] + CoA. Its function is as follows. Palmitoyltransferase that catalyzes the addition of palmitate onto various protein substrates and therefore functions in several unrelated biological processes. Through the palmitoylation of ABCA1 regulates the localization of the transporter to the plasma membrane and thereby regulates its function in cholesterol and phospholipid efflux. Could also pamitoylate the D(2) dopamine receptor DRD2 and regulate its stability and localization to the plasma membrane. Could also play a role in glutamatergic transmission. This chain is Palmitoyltransferase ZDHHC8, found in Pan troglodytes (Chimpanzee).